A 57-amino-acid polypeptide reads, in one-letter code: Large ribosomal subunit protein bL32 (57 aa).

Belongs to the bacterial ribosomal protein bL32 family.

This chain is Large ribosomal subunit protein bL32, found in Lysinibacillus sphaericus (strain C3-41).